Reading from the N-terminus, the 470-residue chain is ATP synthase subunit beta (470 aa).

155–162 (GGAGVGKT) is an ATP binding site.

The protein belongs to the ATPase alpha/beta chains family. F-type ATPases have 2 components, CF(1) - the catalytic core - and CF(0) - the membrane proton channel. CF(1) has five subunits: alpha(3), beta(3), gamma(1), delta(1), epsilon(1). CF(0) has three main subunits: a(1), b(2) and c(9-12). The alpha and beta chains form an alternating ring which encloses part of the gamma chain. CF(1) is attached to CF(0) by a central stalk formed by the gamma and epsilon chains, while a peripheral stalk is formed by the delta and b chains.

Its subcellular location is the cell membrane. It carries out the reaction ATP + H2O + 4 H(+)(in) = ADP + phosphate + 5 H(+)(out). Functionally, produces ATP from ADP in the presence of a proton gradient across the membrane. The catalytic sites are hosted primarily by the beta subunits. This Staphylococcus saprophyticus subsp. saprophyticus (strain ATCC 15305 / DSM 20229 / NCIMB 8711 / NCTC 7292 / S-41) protein is ATP synthase subunit beta.